The chain runs to 341 residues: Golgi-associated RAB2 interactor protein 1B (341 aa).

Belongs to the GARIN family. Expressed in testis (at protein level).

It is found in the golgi apparatus. Its function is as follows. RAB2B effector protein required for accurate acrosome formation and normal male fertility. In complex with RAB2A/RAB2B, seems to suppress excessive vesicle trafficking during acrosome formation. In Mus musculus (Mouse), this protein is Golgi-associated RAB2 interactor protein 1B.